Reading from the N-terminus, the 298-residue chain is ATP synthase F(1) complex subunit gamma, mitochondrial (298 aa).

The transit peptide at 1–25 (MFSRASVVGLSACAVQPQWIQVRNM) directs the protein to the mitochondrion. Lys39 is modified (N6-acetyllysine). The residue at position 49 (Lys49) is an N6-succinyllysine. At Lys55 the chain carries N6-acetyllysine. Lys115 bears the N6-acetyllysine; alternate mark. Lys115 is modified (N6-succinyllysine; alternate). Lys138 bears the N6-acetyllysine mark. Phosphoserine is present on Ser146. At Lys154 the chain carries N6-acetyllysine; alternate. Lys154 bears the N6-succinyllysine; alternate mark. The residue at position 197 (Lys197) is an N6-acetyllysine. N6-succinyllysine is present on Lys270.

This sequence belongs to the ATPase gamma chain family. Component of the ATP synthase complex composed at least of ATP5F1A/subunit alpha, ATP5F1B/subunit beta, ATP5MC1/subunit c (homooctomer), MT-ATP6/subunit a, MT-ATP8/subunit 8, ATP5ME/subunit e, ATP5MF/subunit f, ATP5MG/subunit g, ATP5MK/subunit k, ATP5MJ/subunit j, ATP5F1C/subunit gamma, ATP5F1D/subunit delta, ATP5F1E/subunit epsilon, ATP5PF/subunit F6, ATP5PB/subunit b, ATP5PD/subunit d, ATP5PO/subunit OSCP. ATP synthase complex consists of a soluble F(1) head domain (subunits alpha(3) and beta(3)) - the catalytic core - and a membrane F(0) domain - the membrane proton channel (subunits c, a, 8, e, f, g, k and j). These two domains are linked by a central stalk (subunits gamma, delta, and epsilon) rotating inside the F1 region and a stationary peripheral stalk (subunits F6, b, d, and OSCP). Interacts with FLVCR2; this interaction occurs in the absence of heme and is disrupted upon heme binding.

The protein resides in the mitochondrion inner membrane. Functionally, subunit gamma, of the mitochondrial membrane ATP synthase complex (F(1)F(0) ATP synthase or Complex V) that produces ATP from ADP in the presence of a proton gradient across the membrane which is generated by electron transport complexes of the respiratory chain. ATP synthase complex consist of a soluble F(1) head domain - the catalytic core - and a membrane F(1) domain - the membrane proton channel. These two domains are linked by a central stalk rotating inside the F(1) region and a stationary peripheral stalk. During catalysis, ATP synthesis in the catalytic domain of F(1) is coupled via a rotary mechanism of the central stalk subunits to proton translocation. In vivo, can only synthesize ATP although its ATP hydrolase activity can be activated artificially in vitro. With the central stalk subunit delta, is essential for the biogenesis of F(1) catalytic part of the ATP synthase complex namely in the formation of F1 assembly intermediate. The chain is ATP synthase F(1) complex subunit gamma, mitochondrial from Mus musculus (Mouse).